A 510-amino-acid polypeptide reads, in one-letter code: NAD(P)H-quinone oxidoreductase subunit 2 B, chloroplastic (510 aa).

The next 13 helical transmembrane spans lie at 24 to 44 (LLLF…GLIL), 57 to 77 (IPWL…ALLF), 99 to 119 (IFQF…VEYI), 124 to 144 (MAIT…MFLC), 149 to 169 (LITI…LSGY), 183 to 203 (YLLM…WLYG), 227 to 247 (PGIS…LSPA), 295 to 315 (WHLL…LIAI), 323 to 343 (MLAY…IVGD), 347 to 367 (GYAS…GTFA), 395 to 415 (ALSL…AGFF), 418 to 438 (LHLF…IGLL), and 482 to 502 (LSMI…NPII).

It belongs to the complex I subunit 2 family. NDH is composed of at least 16 different subunits, 5 of which are encoded in the nucleus.

Its subcellular location is the plastid. It is found in the chloroplast thylakoid membrane. The enzyme catalyses a plastoquinone + NADH + (n+1) H(+)(in) = a plastoquinol + NAD(+) + n H(+)(out). The catalysed reaction is a plastoquinone + NADPH + (n+1) H(+)(in) = a plastoquinol + NADP(+) + n H(+)(out). NDH shuttles electrons from NAD(P)H:plastoquinone, via FMN and iron-sulfur (Fe-S) centers, to quinones in the photosynthetic chain and possibly in a chloroplast respiratory chain. The immediate electron acceptor for the enzyme in this species is believed to be plastoquinone. Couples the redox reaction to proton translocation, and thus conserves the redox energy in a proton gradient. The sequence is that of NAD(P)H-quinone oxidoreductase subunit 2 B, chloroplastic from Cucumis sativus (Cucumber).